The chain runs to 564 residues: Nucleoprotein (564 aa).

Residues Leu-54–Ile-236 are binding site for the cap structure m7GTP. Positions 380 and 382 each coordinate Mn(2+). The Zn(2+) site is built by Glu-390, Cys-497, His-500, and Cys-525. A Mn(2+)-binding site is contributed by Asp-529.

The protein belongs to the arenaviridae nucleocapsid protein family. Homomultimerizes to form the nucleocapsid. Binds to viral genomic RNA. Interacts with glycoprotein G2. Interacts with protein Z; this interaction probably directs the encapsidated genome to budding sites. Interacts with protein L; this interaction does not interfere with Z-L interaction. Interacts with host IKBKE (via Protein kinase domain); the interaction inhibits IKBKE kinase activity.

Its subcellular location is the virion. The protein resides in the host cytoplasm. Functionally, encapsidates the genome, protecting it from nucleases. The encapsidated genomic RNA is termed the nucleocapsid (NC). Serves as template for viral transcription and replication. The increased presence of protein N in host cell does not seem to trigger the switch from transcription to replication as observed in other negative strain RNA viruses. Through the interaction with host IKBKE, strongly inhibits the phosphorylation and nuclear translocation of host IRF3, a protein involved in interferon activation pathway, leading to the inhibition of interferon-beta and IRF3-dependent promoters activation. Also encodes a functional 3'-5' exoribonuclease that degrades preferentially dsRNA substrates and thereby participates in the suppression of interferon induction. In Calomys callosus (Large vesper mouse), this protein is Nucleoprotein.